Here is a 310-residue protein sequence, read N- to C-terminus: MSEELSKKHTTRLNKLQKRLRREVGSAIADYNMIEDGDKIMCCLSGGKDSYAMLDILMNLQQRAPIQFEIIAVNLDQKQPGFPEHVLPAYLDKLNVPYHILEKDTYSIVKDKIPEGKTTCSLCSRLRRGTLYGFAQRIGATKIALGHHRDDIIETLFLNMFFGGKMKAMPPKLLSDDGANVVIRPLAYCREKDLEEYANLREFPIIPCNLCGSQENLKRAAVKDMLNQWDRQYPGRIETIFTAMQNTAPSQGVDREQFDFVSLTRDPNAPMRGDVAEANLPAFDFLDIANSGRIDLDAAKRIDIVNTYEV.

A PP-loop motif motif is present at residues 45-50 (SGGKDS). [4Fe-4S] cluster-binding residues include Cys-120, Cys-123, and Cys-211.

This sequence belongs to the TtcA family. Homodimer. The cofactor is Mg(2+). [4Fe-4S] cluster is required as a cofactor.

It is found in the cytoplasm. It carries out the reaction cytidine(32) in tRNA + S-sulfanyl-L-cysteinyl-[cysteine desulfurase] + AH2 + ATP = 2-thiocytidine(32) in tRNA + L-cysteinyl-[cysteine desulfurase] + A + AMP + diphosphate + H(+). Its pathway is tRNA modification. Its function is as follows. Catalyzes the ATP-dependent 2-thiolation of cytidine in position 32 of tRNA, to form 2-thiocytidine (s(2)C32). The sulfur atoms are provided by the cysteine/cysteine desulfurase (IscS) system. This chain is tRNA-cytidine(32) 2-sulfurtransferase, found in Shewanella baltica (strain OS185).